The primary structure comprises 367 residues: Sulfate/thiosulfate import ATP-binding protein CysA 2 (367 aa).

Positions 3–237 (VRVQNIRKEF…PVSPFVYGFI (235 aa)) constitute an ABC transporter domain. 35-42 (GPSGSGKT) contacts ATP.

This sequence belongs to the ABC transporter superfamily. Sulfate/tungstate importer (TC 3.A.1.6) family. In terms of assembly, the complex is composed of two ATP-binding proteins (CysA), two transmembrane proteins (CysT and CysW) and a solute-binding protein (CysP).

It localises to the cell inner membrane. It carries out the reaction sulfate(out) + ATP + H2O = sulfate(in) + ADP + phosphate + H(+). It catalyses the reaction thiosulfate(out) + ATP + H2O = thiosulfate(in) + ADP + phosphate + H(+). Functionally, part of the ABC transporter complex CysAWTP involved in sulfate/thiosulfate import. Responsible for energy coupling to the transport system. This is Sulfate/thiosulfate import ATP-binding protein CysA 2 from Rhizobium meliloti (strain 1021) (Ensifer meliloti).